Reading from the N-terminus, the 171-residue chain is 3-hydroxydecanoyl-[acyl-carrier-protein] dehydratase (171 aa).

The active site involves histidine 70.

Belongs to the thioester dehydratase family. FabA subfamily. Homodimer.

It localises to the cytoplasm. It carries out the reaction a (3R)-hydroxyacyl-[ACP] = a (2E)-enoyl-[ACP] + H2O. The enzyme catalyses (3R)-hydroxydecanoyl-[ACP] = (2E)-decenoyl-[ACP] + H2O. It catalyses the reaction (2E)-decenoyl-[ACP] = (3Z)-decenoyl-[ACP]. It participates in lipid metabolism; fatty acid biosynthesis. Necessary for the introduction of cis unsaturation into fatty acids. Catalyzes the dehydration of (3R)-3-hydroxydecanoyl-ACP to E-(2)-decenoyl-ACP and then its isomerization to Z-(3)-decenoyl-ACP. Can catalyze the dehydratase reaction for beta-hydroxyacyl-ACPs with saturated chain lengths up to 16:0, being most active on intermediate chain length. This is 3-hydroxydecanoyl-[acyl-carrier-protein] dehydratase from Vibrio campbellii (strain ATCC BAA-1116).